A 1202-amino-acid chain; its full sequence is Metabotropic glycine receptor (1202 aa).

The first 24 residues, 1 to 24, serve as a signal peptide directing secretion; it reads MGAMAYSLLLCLLLAHLGLGEVGA. Residues 25–62 form a disordered region; sequence SLDPSERPDSSRERTSRGKQHGQQLPRASAPDPSIPWS. Residues 25-417 lie on the Extracellular side of the membrane; the sequence is SLDPSERPDS…CFVQEDKYLR (393 aa). Basic and acidic residues predominate over residues 28–40; sequence PSERPDSSRERTS. Positions 85-281 are cache-like region; that stretch reads YLYTGDFHQL…CENGSYKPGW (197 aa). 2 N-linked (GlcNAc...) asparagine glycosylation sites follow: N98 and N143. The cysteines at positions 99 and 272 are disulfide-linked. Residues S172 and R173 each contribute to the glycine site. An N-linked (GlcNAc...) asparagine glycan is attached at N215. The segment at 234-253 is disordered; it reads LHRRGSNQGPRGLGHSWRRR. E271 contacts glycine. A glycan (N-linked (GlcNAc...) asparagine) is linked at N274. D307 is a binding site for glycine. Residue N333 is glycosylated (N-linked (GlcNAc...) asparagine). A helical membrane pass occupies residues 418-439; sequence LAIISFQALCMLLDFVSMLVVY. Over 440-451 the chain is Cytoplasmic; that stretch reads HFRKAKSIRASG. The chain crosses the membrane as a helical span at residues 452–474; sequence LILLETILFGSLLLYFPVVILYF. Residues 475–478 are Extracellular-facing; that stretch reads EPST. The chain crosses the membrane as a helical span at residues 479–501; it reads FRCILLRWVRLLGFATVYGTVTL. C481 and C573 are joined by a disulfide. The Cytoplasmic segment spans residues 502–525; sequence KLHRVLKVFLSRTAQRIPYMTGGR. A helical membrane pass occupies residues 526–547; it reads VMRMLAVIVLVVFWFLVGWTSS. Over 548-576 the chain is Extracellular; the sequence is MCQNLERDILLVGQGQTSDNLTFNMCLID. The chain crosses the membrane as a helical span at residues 577–597; the sequence is RWDYMTAVAEFLFLLWGIYLC. Topologically, residues 598-611 are cytoplasmic; it reads YAVRTVPSAFHEPR. The chain crosses the membrane as a helical span at residues 612 to 633; that stretch reads YMAVAVHNELIITAIFHTIRFV. At 634-642 the chain is on the extracellular side; that stretch reads LASRLQPDW. The chain crosses the membrane as a helical span at residues 643 to 664; that stretch reads MLMLYFAHTHLTVTVTIGLLLI. Residues 665–1202 lie on the Cytoplasmic side of the membrane; the sequence is PKFSHSSNNP…SASKIPGPRK (538 aa). Phosphoserine occurs at positions 694, 705, and 708. Disordered regions lie at residues 757-899 and 914-995; these read RITE…TSML and LGLA…QIKD. Composition is skewed to basic and acidic residues over residues 769-781 and 819-828; these read CSKEDKEGTDHSA and STYDHVRDQT. K774 participates in a covalent cross-link: Glycyl lysine isopeptide (Lys-Gly) (interchain with G-Cter in ubiquitin). A compositionally biased stretch (low complexity) spans 845–856; that stretch reads ENSTLESLSSKK. A Phosphoserine modification is found at S865. Residues 925 to 943 show a composition bias toward basic and acidic residues; it reads MEDRAKSQKPQPKDRETNR. Polar residues-rich tracts occupy residues 944–958 and 975–994; these read KYSNSDNTETNPNSN and QRVNLPTANPDASSSTTQIK. S946 is subject to Phosphoserine. Positions 1002 to 1006 match the VCPWE motif 1 motif; that stretch reads VCPWE. A Phosphoserine modification is found at S1061. Positions 1067–1071 match the VCPWE motif 2 motif; it reads VCPWE. S1076 carries the post-translational modification Phosphoserine. 2 stretches are compositionally biased toward polar residues: residues 1132–1144 and 1151–1162; these read QMGDQEKQTSSSV and CISSNNSPQPLT. The disordered stretch occupies residues 1132 to 1162; it reads QMGDQEKQTSSSVDIIPGSCISSNNSPQPLT. The VCPWE motif 3 signature appears at 1167 to 1171; that stretch reads VCPWE.

The protein belongs to the G-protein coupled receptor 3 family. In terms of assembly, homodimer. Associates with the RGS7-GNB5 complex, promoting its localization to the cell membrane and regulating its GTPase activator activity. Interacts (via VCPWE motifs) with GNAO1. Interacts with GPC4. Interacts with EGFLAM.

It localises to the cell membrane. The protein localises to the postsynaptic cell membrane. The protein resides in the presynaptic cell membrane. It is found in the nucleus. Its function is as follows. Metabotropic receptor for glycine that controls synapse formation and function in the brain. Acts as an atypical G-protein coupled receptor that recruits and regulates the RGS7-GNB5 complex instead of activating G proteins. In absence of glycine ligand, promotes the GTPase activator activity of RGS7, increasing the GTPase activity of G protein alpha subunits, thereby driving them into their inactive GDP-bound form. Glycine-binding changes the conformation of the intracellular surface, inhibiting the GTPase activator activity of the RGS7-GNB5 complex, promoting G protein alpha subunits into their active GTP-bound form and regulating cAMP levels. Also able to bind taurine, a compound closely related to glycine, but with a two-fold lower affinity. Glycine receptor-dependent regulation of cAMP controls key ion channels, kinases and neurotrophic factors involved in neuronal excitability and synaptic transmission. Plays a pivotal role in regulating mood and cognition via its ability to regulate neuronal excitability in L2/L3 pyramidal neurons of the prefrontal cortex. Also involved in spatial learning by regulating hippocampal CA1 neuronal excitability. Acts as a synaptic organizer in the hippocampus, required for proper mossy fiber-CA3 neurocircuitry establishment, structure and function: induces presynaptic differentiation in contacting axons via its interaction with GPC4. In addition to glycine, may also act as a receptor for osteocalcin (BGLAP) hormone: osteocalcin-binding initiates a signaling response that prevents neuronal apoptosis in the hippocampus and regulates the synthesis of neurotransmitters. In Rattus norvegicus (Rat), this protein is Metabotropic glycine receptor.